A 365-amino-acid polypeptide reads, in one-letter code: Glycosyltransferase 8 domain-containing protein 1 (365 aa).

Residues 1 to 4 lie on the Cytoplasmic side of the membrane; it reads MTVR. Residues 5 to 22 form a helical; Signal-anchor for type II membrane protein membrane-spanning segment; that stretch reads RVNVVILVLLVVAFLIVL. Topologically, residues 23–365 are lumenal; it reads HRNLLNLNDF…HPIRKHVEEK (343 aa). Residues N102, N181, N245, and N253 are each glycosylated (N-linked (GlcNAc...) asparagine).

The protein belongs to the glycosyltransferase 8 family.

The protein resides in the membrane. The polypeptide is Glycosyltransferase 8 domain-containing protein 1 (glt8d1) (Danio rerio (Zebrafish)).